Consider the following 498-residue polypeptide: Neoxanthin synthase, chloroplastic (498 aa).

The transit peptide at 1-33 (METLLKPLTSLLLSSPTPHRSIFQQNPPSLNPT) directs the protein to the chloroplast. Positions 16–38 (PTPHRSIFQQNPPSLNPTTKKKS) are disordered. Positions 22–33 (IFQQNPPSLNPT) are enriched in polar residues. 84 to 112 (VIIIGAGPAGLRLAEHVSKYGIKVCCVDP) provides a ligand contact to NAD(+).

Belongs to the lycopene cyclase family.

It localises to the plastid. The protein resides in the chloroplast. The enzyme catalyses all-trans-violaxanthin = all-trans-neoxanthin. Its pathway is carotenoid biosynthesis; neoxanthin biosynthesis. In terms of biological role, involved in the synthesis of neoxanthin, the last product of carotenoid synthesis and a precursor of abscisic acid. In Solanum tuberosum (Potato), this protein is Neoxanthin synthase, chloroplastic (NXS).